The following is a 115-amino-acid chain: Large ribosomal subunit protein bL19 (115 aa).

It belongs to the bacterial ribosomal protein bL19 family.

This protein is located at the 30S-50S ribosomal subunit interface and may play a role in the structure and function of the aminoacyl-tRNA binding site. The sequence is that of Large ribosomal subunit protein bL19 from Francisella philomiragia subsp. philomiragia (strain ATCC 25017 / CCUG 19701 / FSC 153 / O#319-036).